The following is a 455-amino-acid chain: Angiopoietin-related protein 3 (455 aa).

Positions 1–16 are cleaved as a signal peptide; the sequence is MHTIKLFLFVVPLVIA. Positions 17-165 are sufficient to inhibit LPL lipase activity; sequence SRVDPDLSSF…QEHPEVTSLK (149 aa). The segment at 17 to 207 is sufficient to inhibit LIPG/EL phospholipase activity; sequence SRVDPDLSSF…EIEKQLRKTG (191 aa). The segment at 32-56 is required for inhibition of LPL lipase activity; that stretch reads EPKSRFAMLDDVKILANGLLQLGHG. Residues 85–206 are a coiled coil; sequence LSLRTNEIKE…KEIEKQLRKT (122 aa). N-linked (GlcNAc...) asparagine glycosylation is present at Asn-115. The disordered stretch occupies residues 202 to 242; that stretch reads QLRKTGIQEPSENSLSSKSRAPRTTPPLQLNETENTEQDDL. Residues 209–220 show a composition bias toward polar residues; it reads QEPSENSLSSKS. An O-linked (GlcNAc) threonine glycan is attached at Thr-226. A glycan (N-linked (GlcNAc...) asparagine) is linked at Asn-232. The 219-residue stretch at 237 to 455 folds into the Fibrinogen C-terminal domain; that stretch reads TEQDDLPADC…SSKMMLQPTT (219 aa). A disulfide bridge connects residues Cys-246 and Cys-274. N-linked (GlcNAc...) asparagine glycans are attached at residues Asn-296 and Asn-357. A disulfide bond links Cys-394 and Cys-408.

In terms of assembly, interacts with ANGPTL8. Interacts with ITGB3. In part proteolytically cleaved by proprotein convertases; proposed to be involved in activation. In primary hepatocytes is intracellularily predominantly processed by FURIN and extracellularily by FURIN and PCSK6/PACE4. In 18.5 dpc embryos 75% of protein is found to be processed compared to 25 % in adults. Predominantly expressed in liver, weakly expressed in kidney and lung. Expressed in podocytes (at protein level). Expressed in hypothalamic neurons (at protein level). Expressed in bone marrow sinusoidal endothelial cells (at protein level).

It is found in the secreted. Its subcellular location is the cell projection. The protein localises to the lamellipodium. Its function is as follows. Acts in part as a hepatokine that is involved in regulation of lipid and glucose metabolism. Proposed to play a role in the trafficking of energy substrates to either storage or oxidative tissues in response to food intake. Has a stimulatory effect on plasma triglycerides (TG), which is achieved by suppressing plasma TG clearance via inhibition of LPL activity; the function seems to be specific for the feeding conditions. The inhibition of LPL activity appears to be an indirect mechanism involving recruitment of proprotein convertases PCSK6 and FURIN to LPL leading to cleavage and dissociation of LPL from the cell surface; the function does not require ANGPTL3 proteolytic cleavage but seems to be mediated by the N-terminal domain, and is not inhibited by GPIHBP1. Can inhibit endothelial lipase, causing increased plasma levels of high density lipoprotein (HDL) cholesterol and phospholipids; the cleaved N-terminal domain is more efficient than the uncleaved proprotein. Can bind to adipocytes to activate lipolysis, releasing free fatty acids and glycerol. Suppresses LPL specifically in oxidative tissues which is required to route very low density lipoprotein (VLDL)-TG to white adipose tissue (WAT) for storage in response to food; the function may involve cooperation with circulating, liver-derived ANGPTL8 and ANGPTL4 expression in WAT. Contributes to lower plasma levels of low density lipoprotein (LDL)-cholesterol by a mechanism that is independent of the canonical pathway implicating APOE and LDLR. May stimulate hypothalamic LPL activity. Functionally, involved in angiogenesis. Binds to endothelial cells via integrin alpha-V/beta-3 (ITGAV:ITGB3), activates FAK, MAPK and Akt signaling pathways and induces cell adhesion and cell migration. May increase the motility of podocytes. Secreted from podocytes, may modulate properties of glomerular endothelial cells involving integrin alpha-V/beta-3 and Akt signaling. May induce actin filament rearrangements in podocytes implicating integrin alpha-V/beta-3 and Rac1 activation. Binds to hematopoietic stem cells (HSC) and is involved in the regulation of HSC activity probably implicating down-regulation of IKZF1/IKAROS. In Mus musculus (Mouse), this protein is Angiopoietin-related protein 3 (Angptl3).